The primary structure comprises 125 residues: Probable prefoldin subunit 6 (125 aa).

Belongs to the prefoldin subunit beta family. As to quaternary structure, heterohexamer of two PFD-alpha type and four PFD-beta type subunits.

Binds specifically to cytosolic chaperonin (c-CPN) and transfers target proteins to it. Binds to nascent polypeptide chain and promotes folding in an environment in which there are many competing pathways for nonnative proteins. In Drosophila melanogaster (Fruit fly), this protein is Probable prefoldin subunit 6.